Here is a 762-residue protein sequence, read N- to C-terminus: Multifunctional tryptophan biosynthesis protein (762 aa).

Residues 25–224 (NLILIDNYDS…LHMQGGTWAE (200 aa)) enclose the Glutamine amidotransferase type-1 domain. Residue 76–78 (GPG) participates in L-glutamine binding. The active-site Nucleophile; for GATase activity is cysteine 104. L-glutamine-binding positions include glutamine 108 and 154-155 (SL). Residues histidine 198 and glutamate 200 each act as for GATase activity in the active site. An indole-3-glycerol phosphate synthase region spans residues 251-515 (ILQKIYAHRK…DATQFIRELC (265 aa)). An N-(5'-phosphoribosyl)anthranilate isomerase region spans residues 531 to 762 (LVKICGTRSA…EFVKAAKSVR (232 aa)).

As to quaternary structure, tetramer of two components I and two components II.

The catalysed reaction is chorismate + L-glutamine = anthranilate + pyruvate + L-glutamate + H(+). It catalyses the reaction N-(5-phospho-beta-D-ribosyl)anthranilate = 1-(2-carboxyphenylamino)-1-deoxy-D-ribulose 5-phosphate. The enzyme catalyses 1-(2-carboxyphenylamino)-1-deoxy-D-ribulose 5-phosphate + H(+) = (1S,2R)-1-C-(indol-3-yl)glycerol 3-phosphate + CO2 + H2O. It participates in amino-acid biosynthesis; L-tryptophan biosynthesis; L-tryptophan from chorismate: step 1/5. Its pathway is amino-acid biosynthesis; L-tryptophan biosynthesis; L-tryptophan from chorismate: step 3/5. The protein operates within amino-acid biosynthesis; L-tryptophan biosynthesis; L-tryptophan from chorismate: step 4/5. Trifunctional enzyme bearing the Gln amidotransferase (GATase) domain of anthranilate synthase, indole-glycerolphosphate synthase, and phosphoribosylanthranilate isomerase activities. In Neurospora crassa (strain ATCC 24698 / 74-OR23-1A / CBS 708.71 / DSM 1257 / FGSC 987), this protein is Multifunctional tryptophan biosynthesis protein (trp-1).